A 317-amino-acid chain; its full sequence is tRNA N6-adenosine threonylcarbamoyltransferase (317 aa).

Residues histidine 110 and histidine 114 each contribute to the Fe cation site. Substrate contacts are provided by residues 132 to 136 (VVSGG), aspartate 165, glycine 178, aspartate 182, and asparagine 271. A Fe cation-binding site is contributed by aspartate 300.

It belongs to the KAE1 / TsaD family. Fe(2+) serves as cofactor.

The protein localises to the cytoplasm. The enzyme catalyses L-threonylcarbamoyladenylate + adenosine(37) in tRNA = N(6)-L-threonylcarbamoyladenosine(37) in tRNA + AMP + H(+). Functionally, required for the formation of a threonylcarbamoyl group on adenosine at position 37 (t(6)A37) in tRNAs that read codons beginning with adenine. Is involved in the transfer of the threonylcarbamoyl moiety of threonylcarbamoyl-AMP (TC-AMP) to the N6 group of A37, together with TsaE and TsaB. TsaD likely plays a direct catalytic role in this reaction. The chain is tRNA N6-adenosine threonylcarbamoyltransferase from Mesoplasma florum (strain ATCC 33453 / NBRC 100688 / NCTC 11704 / L1) (Acholeplasma florum).